A 367-amino-acid polypeptide reads, in one-letter code: Ribosomal RNA large subunit methyltransferase M (367 aa).

Residues S188, C221 to G224, D240, D260, and D277 contribute to the S-adenosyl-L-methionine site. K306 serves as the catalytic Proton acceptor.

It belongs to the class I-like SAM-binding methyltransferase superfamily. RNA methyltransferase RlmE family. RlmM subfamily. Monomer.

The protein localises to the cytoplasm. The enzyme catalyses cytidine(2498) in 23S rRNA + S-adenosyl-L-methionine = 2'-O-methylcytidine(2498) in 23S rRNA + S-adenosyl-L-homocysteine + H(+). Catalyzes the 2'-O-methylation at nucleotide C2498 in 23S rRNA. The polypeptide is Ribosomal RNA large subunit methyltransferase M (Serratia proteamaculans (strain 568)).